Consider the following 250-residue polypeptide: Putative inner dynein arm light chain, axonemal (250 aa).

The stretch at 168-250 (MRKALQAHEE…QLEGITAPKK (83 aa)) forms a coiled coil.

Belongs to the inner dynein arm light chain family.

The protein localises to the cell projection. It is found in the cilium. The protein resides in the dynein axonemal particle. Functionally, may play a dynamic role in flagellar motility. The sequence is that of Putative inner dynein arm light chain, axonemal from Drosophila melanogaster (Fruit fly).